The following is a 223-amino-acid chain: Probable transaldolase (223 aa).

Catalysis depends on Lys-91, which acts as the Schiff-base intermediate with substrate.

It belongs to the transaldolase family. Type 3B subfamily.

It is found in the cytoplasm. The catalysed reaction is D-sedoheptulose 7-phosphate + D-glyceraldehyde 3-phosphate = D-erythrose 4-phosphate + beta-D-fructose 6-phosphate. Its pathway is carbohydrate degradation; pentose phosphate pathway; D-glyceraldehyde 3-phosphate and beta-D-fructose 6-phosphate from D-ribose 5-phosphate and D-xylulose 5-phosphate (non-oxidative stage): step 2/3. Its function is as follows. Transaldolase is important for the balance of metabolites in the pentose-phosphate pathway. The chain is Probable transaldolase from Chlorobium phaeobacteroides (strain BS1).